The following is a 932-amino-acid chain: 2-oxoglutarate dehydrogenase E1 component (932 aa).

The protein belongs to the alpha-ketoglutarate dehydrogenase family. Homodimer. Part of the 2-oxoglutarate dehydrogenase (OGDH) complex composed of E1 (2-oxoglutarate dehydrogenase), E2 (dihydrolipoamide succinyltransferase) and E3 (dihydrolipoamide dehydrogenase); the complex contains multiple copies of the three enzymatic components (E1, E2 and E3). Thiamine diphosphate serves as cofactor.

The catalysed reaction is N(6)-[(R)-lipoyl]-L-lysyl-[protein] + 2-oxoglutarate + H(+) = N(6)-[(R)-S(8)-succinyldihydrolipoyl]-L-lysyl-[protein] + CO2. Functionally, E1 component of the 2-oxoglutarate dehydrogenase (OGDH) complex which catalyzes the decarboxylation of 2-oxoglutarate, the first step in the conversion of 2-oxoglutarate to succinyl-CoA and CO(2). The protein is 2-oxoglutarate dehydrogenase E1 component of Staphylococcus aureus (strain MRSA252).